The primary structure comprises 428 residues: tRNA modification GTPase MnmE (428 aa).

Residues Arg-20, Glu-77, and Lys-117 each coordinate (6S)-5-formyl-5,6,7,8-tetrahydrofolate. Residues 213–351 form the TrmE-type G domain; it reads GFEIALVGAP…LLEKIRSVFS (139 aa). Asn-223 contacts K(+). GTP contacts are provided by residues 223–228, 242–248, and 267–270; these read NAGKST, SEIAGTT, and DTAG. Residue Ser-227 coordinates Mg(2+). 3 residues coordinate K(+): Ser-242, Ile-244, and Thr-247. Thr-248 serves as a coordination point for Mg(2+). Lys-428 contributes to the (6S)-5-formyl-5,6,7,8-tetrahydrofolate binding site.

The protein belongs to the TRAFAC class TrmE-Era-EngA-EngB-Septin-like GTPase superfamily. TrmE GTPase family. As to quaternary structure, homodimer. Heterotetramer of two MnmE and two MnmG subunits. K(+) is required as a cofactor.

Its subcellular location is the cytoplasm. Its function is as follows. Exhibits a very high intrinsic GTPase hydrolysis rate. Involved in the addition of a carboxymethylaminomethyl (cmnm) group at the wobble position (U34) of certain tRNAs, forming tRNA-cmnm(5)s(2)U34. The sequence is that of tRNA modification GTPase MnmE from Roseobacter denitrificans (strain ATCC 33942 / OCh 114) (Erythrobacter sp. (strain OCh 114)).